A 496-amino-acid chain; its full sequence is Putative aldehyde dehydrogenase-like protein C922.07c (496 aa).

241 to 246 serves as a coordination point for NAD(+); sequence GSTKVG. Residue E263 is the Proton acceptor of the active site. C297 (nucleophile) is an active-site residue.

Belongs to the aldehyde dehydrogenase family.

The protein localises to the cytoplasm. It localises to the nucleus. In Schizosaccharomyces pombe (strain 972 / ATCC 24843) (Fission yeast), this protein is Putative aldehyde dehydrogenase-like protein C922.07c.